Consider the following 87-residue polypeptide: Small ribosomal subunit protein bS20 (87 aa).

The segment at Met1–Ser26 is disordered.

It belongs to the bacterial ribosomal protein bS20 family.

In terms of biological role, binds directly to 16S ribosomal RNA. The protein is Small ribosomal subunit protein bS20 of Tolumonas auensis (strain DSM 9187 / NBRC 110442 / TA 4).